The chain runs to 342 residues: S-adenosylmethionine:tRNA ribosyltransferase-isomerase (342 aa).

The protein belongs to the QueA family. As to quaternary structure, monomer.

The protein resides in the cytoplasm. The catalysed reaction is 7-aminomethyl-7-carbaguanosine(34) in tRNA + S-adenosyl-L-methionine = epoxyqueuosine(34) in tRNA + adenine + L-methionine + 2 H(+). The protein operates within tRNA modification; tRNA-queuosine biosynthesis. Functionally, transfers and isomerizes the ribose moiety from AdoMet to the 7-aminomethyl group of 7-deazaguanine (preQ1-tRNA) to give epoxyqueuosine (oQ-tRNA). This Streptococcus pyogenes serotype M1 protein is S-adenosylmethionine:tRNA ribosyltransferase-isomerase.